Consider the following 352-residue polypeptide: Pejvakin (352 aa).

It belongs to the gasdermin family. As to quaternary structure, interacts with MAP1LC3B; interaction is direct. Interacts with IQGAP1. Interacts with ROCK2. Interacts with TRIOBP. As to expression, in ear, it is detected in the organ of Corti and the spiral ganglion within the cochlea in the sensory areas of the vestibule (cristae ampullares of the semicircular ducts, and maculae of the saccule and utricle) and in the first 3 relays (cochlear nuclei, superior olivary complex and inferior colliculus) of the afferent auditory pathway. Detected in hair cells of the cochlea and vestibule but not in neurons. In the afferent auditory pathway, it is present in the cell bodies of neurons but not in fiber bundles such as the trapezoid body in the brainstem. Also detected in spiral ganglion cells, which form the auditory nerve and project to the cochlear nuclei in the brainstem. Also present in the cochlear nuclei, the superior olive and the inferior colliculus (at protein level). Expressed in all the adult organs tested: brain, eye, inner ear, heart, lung, kidney, liver, intestine, testis and weakly in skeletal muscle.

It localises to the peroxisome membrane. The protein resides in the cell projection. It is found in the cilium. In terms of biological role, peroxisome-associated protein required to protect auditory hair cells against noise-induced damage. Acts by regulating noise-induced peroxisome proliferation in auditory hair cells and neurons, and promoting autophagic degradation of damaged peroxisomes (pexophagy). Noise overexposure increases reactive oxygen species (ROS) levels, causing oxidative damage to auditory hair cells and resulting in hearing loss. PJVK acts as a ROS sensor that recruits the autophagy machinery to trigger pexophagy of peroxisomes damaged by oxidative stress. In addition to pexophagy, also required to promote peroxisome proliferation in response to sound overstimulation. The sequence is that of Pejvakin from Mus musculus (Mouse).